The sequence spans 627 residues: DNA-directed RNA polymerase subunit gamma (627 aa).

Residues C70, C72, C85, and C88 each contribute to the Zn(2+) site. Mg(2+)-binding residues include D468, D470, and D472.

It belongs to the RNA polymerase beta' chain family. RpoC1 subfamily. As to quaternary structure, in cyanobacteria the RNAP catalytic core is composed of 2 alpha, 1 beta, 1 beta', 1 gamma and 1 omega subunit. When a sigma factor is associated with the core the holoenzyme is formed, which can initiate transcription. Mg(2+) serves as cofactor. Requires Zn(2+) as cofactor.

It carries out the reaction RNA(n) + a ribonucleoside 5'-triphosphate = RNA(n+1) + diphosphate. Functionally, DNA-dependent RNA polymerase catalyzes the transcription of DNA into RNA using the four ribonucleoside triphosphates as substrates. This is DNA-directed RNA polymerase subunit gamma from Synechococcus sp. (strain JA-2-3B'a(2-13)) (Cyanobacteria bacterium Yellowstone B-Prime).